The sequence spans 427 residues: Heterogeneous nuclear ribonucleoprotein K (427 aa).

Residues 1-34 are disordered; sequence METEQQEETFTNTETNGKRPAEDMEEEQAFKRSR. The segment covering 16-34 has biased composition (basic and acidic residues); the sequence is NGKRPAEDMEEEQAFKRSR. 2 consecutive KH domains span residues 39-101 and 117-182; these read MVEL…LKKI and DCEL…IKII. 2 consecutive repeat copies span residues 51-73 and 56-59. Residues 51-385 form a 2 X 22 AA approximate repeats region; it reads AGAVIGKGGK…QIRHESGASI (335 aa). Positions 56-371 are 5 X 4 AA repeats of G-X-G-G; it reads GKGGKNIKAL…LAGSIIGKGG (316 aa). Residues 209–246 are RNA-binding RGG-box; that stretch reads YGGFTMMFDDRRGRPVGFPMRGRGGFDRMPPNRGGRPM. Tandem repeats lie at residues 218-223, 230-233, and 240-243. Positions 218 to 302 are 2 X 6 AA approximate repeats; sequence DRRGRPVGFP…LMSYDRRGRP (85 aa). The interval 221–305 is disordered; that stretch reads GRPVGFPMRG…YDRRGRPGDR (85 aa). Residues 249–258 show a composition bias toward basic and acidic residues; it reads SRRDYDDMSP. 4 consecutive repeat copies span residues 268–271, 297–302, 363–385, and 368–371. The span at 295–305 shows a compositional bias: basic and acidic residues; it reads SYDRRGRPGDR. The KH 3 domain maps to 351–415; it reads IITTQVTIPK…DQIQNAQYLL (65 aa).

Its subcellular location is the cytoplasm. The protein localises to the nucleus. It localises to the nucleoplasm. In terms of biological role, one of the major pre-mRNA-binding proteins. Binds tenaciously to poly(C) sequences. Likely to play a role in the nuclear metabolism of hnRNAs, particularly for pre-mRNAs that contain cytidine-rich sequences. Can also bind poly(C) single-stranded DNA. May play an important role in p53/TP53 response to DNA damage, acting at the level of both transcription activation and repression. As part of a ribonucleoprotein complex, may negatively regulate the transcription of genes involved in neuronal differentiation. The chain is Heterogeneous nuclear ribonucleoprotein K (HNRNPK) from Gallus gallus (Chicken).